A 1704-amino-acid polypeptide reads, in one-letter code: ABC transporter ced-7 (1704 aa).

Residues Val-23–Val-43 traverse the membrane as a helical segment. N-linked (GlcNAc...) asparagine glycosylation is found at Asn-126 and Asn-145. The next 3 helical transmembrane spans lie at Ala-256–Ile-276, Val-306–Phe-326, and Ala-334–Val-354. An N-linked (GlcNAc...) asparagine glycan is attached at Asn-359. Transmembrane regions (helical) follow at residues Asn-362–Leu-382 and Ile-389–Ala-409. Asn-421 and Asn-427 each carry an N-linked (GlcNAc...) asparagine glycan. The chain crosses the membrane as a helical span at residues Gly-436–Val-456. N-linked (GlcNAc...) asparagine glycosylation occurs at Asn-481. The disordered stretch occupies residues Asn-511–Asp-536. Residues Pro-512–Ser-525 are compositionally biased toward polar residues. An ABC transporter 1 domain is found at Ile-546–Val-777. Gly-580–Ser-587 contributes to the ATP binding site. N-linked (GlcNAc...) asparagine glycans are attached at residues Asn-678, Asn-727, and Asn-899. Composition is skewed to polar residues over residues Arg-888–Glu-902 and Asp-911–Ser-921. Residues Arg-888–Pro-933 are disordered. The chain crosses the membrane as a helical span at residues Leu-963–Leu-983. Asn-986, Asn-1012, and Asn-1045 each carry an N-linked (GlcNAc...) asparagine glycan. Helical transmembrane passes span Leu-1126–Ile-1146, Phe-1153–Ile-1173, Gly-1176–Met-1196, Ala-1201–Val-1221, Leu-1234–Phe-1254, Ile-1266–Thr-1286, and Leu-1311–Val-1331. The ABC transporter 2 domain occupies Leu-1379–Ser-1603. ATP is bound at residue Gly-1411–Thr-1418. 2 N-linked (GlcNAc...) asparagine glycosylation sites follow: Asn-1597 and Asn-1632.

It belongs to the ABC transporter superfamily. ABCA family. In terms of tissue distribution, ubiquitous in embryos. Expressed in larval germline precursors. Expression in larvae and adults is seen in amphid sheath cells, pharyngeal-intestinal valve and phasmid sheath cells. Low levels of expression are also seen in gonadal sheath cells.

It is found in the membrane. In terms of biological role, functions in the engulfment of cell corpses during embryonic programmed cell death to translocate molecules that mediate homotypic adhesion between cell surfaces of the dying and engulfing cells. The protein is ABC transporter ced-7 (ced-7) of Caenorhabditis elegans.